The following is a 1097-amino-acid chain: Chitin synthase 2 (1097 aa).

The segment at 1–46 (MAGYGHSTAGGFGSGSGSGPPGPQYMLPQYDEGDDPDADATPAGQG) is disordered. The Extracellular portion of the chain corresponds to 1 to 748 (MAGYGHSTAG…HVEFLYHLLQ (748 aa)). Gly residues predominate over residues 8 to 19 (TAGGFGSGSGSG). Asparagine 55 carries N-linked (GlcNAc...) asparagine glycosylation. Disordered regions lie at residues 148-217 (SGHG…YPRY) and 259-322 (SSQI…RPPQ). The span at 284–296 (STTYSSNTGTSAS) shows a compositional bias: polar residues. Residues 299–313 (DKFEHYGPIPEEGKH) show a composition bias toward basic and acidic residues. Residues asparagine 416 and asparagine 424 are each glycosylated (N-linked (GlcNAc...) asparagine). Residues 749–769 (LLFTYFSLANFYLAFYFIAGG) traverse the membrane as a helical segment. At 770–786 (LADPHVDPFNSDGHVAR) the chain is on the cytoplasmic side. The helical transmembrane segment at 787–807 (IIFNILRYVCVLLICTQFILS) threads the bilayer. At 808 to 821 (LGNRPQGAKRMYLA) the chain is on the extracellular side. The helical transmembrane segment at 822-842 (SMIIYAVIMVYTTFATIFIVV) threads the bilayer. Residues 843 to 865 (RQIQPSQKSDDKPDLELGNNVFT) lie on the Cytoplasmic side of the membrane. The helical transmembrane segment at 866–886 (NLIVSVASTLGLYFVMSFLYL) threads the bilayer. The Extracellular segment spans residues 887–894 (DPWHMFTS). The helical transmembrane segment at 895–915 (AIQYFVLLPSYICTLQIYAFC) threads the bilayer. At 916–993 (NTHDVTWGTK…QDYYKSVRTY (78 aa)) the chain is on the cytoplasmic side. Residues 994–1014 (MVVSWMVANATLAMAVSEAYG) form a helical membrane-spanning segment. Residues 1015–1025 (DSEIGDNFYLR) are Extracellular-facing. A helical membrane pass occupies residues 1026–1046 (FILWAVAALALFRALGSTTFA). Topologically, residues 1047–1097 (AINLVSALVEGRVRLRLNMKGFRWIKEKWGDADVKGKFEGLGDRARGLARR) are cytoplasmic.

The protein belongs to the chitin synthase family.

Its subcellular location is the cell membrane. It catalyses the reaction [(1-&gt;4)-N-acetyl-beta-D-glucosaminyl](n) + UDP-N-acetyl-alpha-D-glucosamine = [(1-&gt;4)-N-acetyl-beta-D-glucosaminyl](n+1) + UDP + H(+). Its function is as follows. Polymerizes chitin, a structural polymer of the cell wall and septum, by transferring the sugar moiety of UDP-GlcNAc to the non-reducing end of the growing chitin polymer. This chain is Chitin synthase 2 (chs-2), found in Neurospora crassa (strain ATCC 24698 / 74-OR23-1A / CBS 708.71 / DSM 1257 / FGSC 987).